Here is a 101-residue protein sequence, read N- to C-terminus: Small ribosomal subunit protein eS24 (101 aa).

This sequence belongs to the eukaryotic ribosomal protein eS24 family.

The polypeptide is Small ribosomal subunit protein eS24 (Methanocaldococcus jannaschii (strain ATCC 43067 / DSM 2661 / JAL-1 / JCM 10045 / NBRC 100440) (Methanococcus jannaschii)).